The following is a 128-amino-acid chain: Large ribosomal subunit protein bL17 (128 aa).

The protein belongs to the bacterial ribosomal protein bL17 family. In terms of assembly, part of the 50S ribosomal subunit. Contacts protein L32.

The chain is Large ribosomal subunit protein bL17 from Haemophilus influenzae (strain 86-028NP).